The following is a 106-amino-acid chain: Large ribosomal subunit protein eL42 (106 aa).

The tract at residues 36–56 (FAQGKRRYDRKQSGYGGQTKP) is disordered.

Belongs to the eukaryotic ribosomal protein eL42 family.

The polypeptide is Large ribosomal subunit protein eL42 (RPL44) (Phaffia rhodozyma (Yeast)).